Consider the following 460-residue polypeptide: Hydroxymethylglutaryl-CoA synthase MYCGRDRAFT_54740 (460 aa).

Ala-35 lines the (3S)-3-hydroxy-3-methylglutaryl-CoA pocket. The active-site Proton donor/acceptor is the Glu-86. Residues Cys-120, Asn-158, Thr-162, Ser-212, His-262, Lys-271, Asn-339, and Ser-373 each contribute to the (3S)-3-hydroxy-3-methylglutaryl-CoA site. The Acyl-thioester intermediate role is filled by Cys-120. Residue His-262 is the Proton donor/acceptor of the active site.

The protein belongs to the thiolase-like superfamily. HMG-CoA synthase family.

It catalyses the reaction acetoacetyl-CoA + acetyl-CoA + H2O = (3S)-3-hydroxy-3-methylglutaryl-CoA + CoA + H(+). The protein operates within siderophore biosynthesis. Functionally, hydroxymethylglutaryl-CoA synthase involved in the biosynthesis of a ferrichrome A-like siderophors which may contribute to organismal virulence. The first step of siderophore biosynthesis is performed by the HMG-CoA synthase (HMGS) MYCGRDRAFT_54740 which catalyzes the generation of HMG-CoA and CoA using acetoacetyl-CoA and acetyl-CoA as substrates. The enoyl-CoA isomerase/hydratase MYCGRDRAFT_76805 then catalyzes the conversion of HMG-CoA to methylglutaconyl-CoA. The acyltransferase MYCGRDRAFT_85486 then fuses methylglutaconyl-CoA with hydroxyornithine to yield methylglutaconyl hydroxyornithine. Methylglutaconyl hydroxyornithine is then available for use by the nonribosomal peptide synthetase NRPS2 to generate the ferrichrome A-like siderophore. In Zymoseptoria tritici (strain CBS 115943 / IPO323) (Speckled leaf blotch fungus), this protein is Hydroxymethylglutaryl-CoA synthase MYCGRDRAFT_54740 (ERG13).